Reading from the N-terminus, the 1350-residue chain is Nicotinate hydroxylase hnxS (1350 aa).

[2Fe-2S] cluster is bound by residues Cys-49, Cys-54, Cys-89, Cys-92, Cys-133, and Cys-135. The segment at 164-193 (LVGTEEETESDMGAHSGSGDTGSRSSGSCG) is disordered. The span at 180-192 (GSGDTGSRSSGSC) shows a compositional bias: low complexity. The region spanning 256-445 (YGDAEQAWVK…TKIAVPMPSK (190 aa)) is the FAD-binding PCMH-type domain. FAD-binding positions include 284-291 (LVTGASEV), 379-383 (CLAGN), Asp-392, and Lys-455. Mo-molybdopterin is bound by residues Gln-793 and Phe-824. Positions 828 and 906 each coordinate substrate. 2 residues coordinate Mo-molybdopterin: Arg-938 and Ala-1107. The active-site Proton acceptor is the Glu-1281.

This sequence belongs to the xanthine dehydrogenase family. [2Fe-2S] cluster serves as cofactor. It depends on FAD as a cofactor. Mo-molybdopterin is required as a cofactor.

Its activity is regulated as follows. Allopurinol inhibits catalytic activity in a linear fashion. Nicotinate hydroxylase, part of the hnx cluster involved in the purine degradation. The nicotinate hydroxylase hnxS accepts nicotinate as a substrate and catalyzes the first step of nicotinate catabolism. HnxS also accepts hypoxanthine, but not xanthine, as a substrate. The major facilitator-type transporters hxnP and hxnZ are probably involved in the uptake of nicotinate-derived metabolites, and the oxidoreductases hxnT and hxnY in the further metabolism of 6-OH nicotinic acid. The sequence is that of Nicotinate hydroxylase hnxS from Emericella nidulans (strain FGSC A4 / ATCC 38163 / CBS 112.46 / NRRL 194 / M139) (Aspergillus nidulans).